The sequence spans 78 residues: MSRVCQLSGKRANNGMAVSHSHVRTKKLQQVNLQQRRLWWAEGNRWVKLRVSTSALRTIQKKGLGAYAKELGINLAKI.

Residues 1–21 (MSRVCQLSGKRANNGMAVSHS) form a disordered region.

Belongs to the bacterial ribosomal protein bL28 family.

The sequence is that of Large ribosomal subunit protein bL28 from Synechococcus sp. (strain RCC307).